The sequence spans 160 residues: Cytochrome c-type biogenesis protein CcmE (160 aa).

Residues 1 to 8 are Cytoplasmic-facing; the sequence is MSAPRKTR. The chain crosses the membrane as a helical; Signal-anchor for type II membrane protein span at residues 9 to 29; that stretch reads LYAILAVVCGAVLTIALMLYA. Topologically, residues 30–160 are periplasmic; that stretch reads LSSNIDLFYT…PAAGPEGKRL (131 aa). Residues histidine 130 and tyrosine 134 each coordinate heme.

The protein belongs to the CcmE/CycJ family.

Its subcellular location is the cell inner membrane. Heme chaperone required for the biogenesis of c-type cytochromes. Transiently binds heme delivered by CcmC and transfers the heme to apo-cytochromes in a process facilitated by CcmF and CcmH. In Pectobacterium atrosepticum (strain SCRI 1043 / ATCC BAA-672) (Erwinia carotovora subsp. atroseptica), this protein is Cytochrome c-type biogenesis protein CcmE.